A 106-amino-acid polypeptide reads, in one-letter code: NADH dehydrogenase [ubiquinone] 1 beta subcomplex subunit 10-B (106 aa).

The segment at 1 to 25 (MGRKKGLPEFEESAPDGFDPENPYK) is disordered.

Belongs to the complex I NDUFB10 subunit family. In terms of assembly, complex I is composed of at least 49 different subunits.

The protein resides in the mitochondrion inner membrane. Accessory subunit of the mitochondrial membrane respiratory chain NADH dehydrogenase (Complex I), that is believed not to be involved in catalysis. Complex I functions in the transfer of electrons from NADH to the respiratory chain. The immediate electron acceptor for the enzyme is believed to be ubiquinone. This chain is NADH dehydrogenase [ubiquinone] 1 beta subcomplex subunit 10-B, found in Arabidopsis thaliana (Mouse-ear cress).